A 567-amino-acid polypeptide reads, in one-letter code: MQNSGRDLWQNQSGYMSSLQQGLNKSNMVGASTSHGKTPMLMANNDVFTIAPYRTRKDNARVSVLDKYEIIGYIAAGTYGKVYKAKSRQSSKSSSSTGSDSLAQDTKPTTEFSNTSSLQNAGTYGDMMGAHGPNSNNISAGGNTNPELSTRNNPNNPRVPTSTIISGDKRNSENTDNRRKAETTMYYAIKKFKTEKDGIEQLHYTGISQSACREMALCRELDNNHLTKLVEIFLQKKSIYMVYEFAEHDLLQIIHFHSHPEKRMIPPRMIRSIMWQILDGVSYLHQNWVLHRDLKPANIMVTMDGVVKIGDLGLARKFSNMLQTMYTGDKVVVTIWYRAPELLLGARHYTPAIDLWAVGCIFAELIGLQPIFKGEEAKMDSKKTVPFQANQLQRILKILGTPTPKSWPHLQKYPEYEQLSKFPKYRDNLPGWFHSAGGRDKHALSLLYHLLNYNPIERIDAINALDHSYFTHGDMPVCENVFEGLNYKYPARRIHTNDNDILNLGLHKPKVPAKVVQPTMNNSTATLGGLGVNKRILAAAAAAAAAVSGNSSSQSSRNMEPMKKKRK.

Residues 68–470 enclose the Protein kinase domain; that stretch reads YEIIGYIAAG…AINALDHSYF (403 aa). Residue 74-82 coordinates ATP; it reads IAAGTYGKV. The segment at 88–179 is disordered; it reads RQSSKSSSST…RNSENTDNRR (92 aa). The span at 90–101 shows a compositional bias: low complexity; the sequence is SSKSSSSTGSDS. 2 stretches are compositionally biased toward polar residues: residues 102-122 and 133-150; these read LAQD…QNAG and PNSN…ELST. Positions 167–179 are enriched in basic and acidic residues; that stretch reads GDKRNSENTDNRR. K190 serves as a coordination point for ATP. The Proton acceptor role is filled by D293. The segment covering 546-556 has biased composition (low complexity); it reads AVSGNSSSQSS. Positions 546–567 are disordered; it reads AVSGNSSSQSSRNMEPMKKKRK.

This sequence belongs to the protein kinase superfamily. CMGC Ser/Thr protein kinase family. CDC2/CDKX subfamily. In terms of assembly, component of the SRB8-11 complex, a regulatory module of the Mediator complex. The cofactor is Mg(2+).

The protein resides in the nucleus. The catalysed reaction is L-seryl-[protein] + ATP = O-phospho-L-seryl-[protein] + ADP + H(+). It carries out the reaction L-threonyl-[protein] + ATP = O-phospho-L-threonyl-[protein] + ADP + H(+). The enzyme catalyses [DNA-directed RNA polymerase] + ATP = phospho-[DNA-directed RNA polymerase] + ADP + H(+). Functionally, component of the SRB8-11 complex. The SRB8-11 complex is a regulatory module of the Mediator complex which is itself involved in regulation of basal and activated RNA polymerase II-dependent transcription. The SRB8-11 complex may be involved in the transcriptional repression of a subset of genes regulated by Mediator. It may inhibit the association of the Mediator complex with RNA polymerase II to form the holoenzyme complex. The SRB8-11 complex phosphorylates the C-terminal domain (CTD) of the largest subunit of RNA polymerase II. The sequence is that of Serine/threonine-protein kinase SSN3 (SSN3) from Candida glabrata (strain ATCC 2001 / BCRC 20586 / JCM 3761 / NBRC 0622 / NRRL Y-65 / CBS 138) (Yeast).